We begin with the raw amino-acid sequence, 619 residues long: 1-deoxy-D-xylulose-5-phosphate synthase (619 aa).

Thiamine diphosphate contacts are provided by residues His76 and 117-119; that span reads AHS. Asp148 serves as a coordination point for Mg(2+). Thiamine diphosphate is bound by residues 149–150, Asn177, Tyr284, and Glu366; that span reads GA. Position 177 (Asn177) interacts with Mg(2+).

It belongs to the transketolase family. DXPS subfamily. In terms of assembly, homodimer. Requires Mg(2+) as cofactor. Thiamine diphosphate serves as cofactor.

It carries out the reaction D-glyceraldehyde 3-phosphate + pyruvate + H(+) = 1-deoxy-D-xylulose 5-phosphate + CO2. It participates in metabolic intermediate biosynthesis; 1-deoxy-D-xylulose 5-phosphate biosynthesis; 1-deoxy-D-xylulose 5-phosphate from D-glyceraldehyde 3-phosphate and pyruvate: step 1/1. In terms of biological role, catalyzes the acyloin condensation reaction between C atoms 2 and 3 of pyruvate and glyceraldehyde 3-phosphate to yield 1-deoxy-D-xylulose-5-phosphate (DXP). The chain is 1-deoxy-D-xylulose-5-phosphate synthase from Azoarcus sp. (strain BH72).